A 76-amino-acid chain; its full sequence is uncharacterized protein (76 aa).

This is an uncharacterized protein from Bacillus subtilis (strain 168).